The following is a 207-amino-acid chain: MAVDYSLYLVTDRILVGPKDFLLSIRKALEGGVTLLQLREKETNSREFYDIGVKVKELAAEFGVPLIINDRVDLALALDADGVHVGQQDLPLAKVRNIIGPDKILGYSVSSLEEALQGERMGADYLGAGPVFPTGSKKDAAEAIGLAKLKEIKAGVSLPVVGIGGIGAANLRAVKETGIDGVSVISAILSQEDPCAAAKGLMDLWRN.

Residues 37–41 (QLREK) and asparagine 69 contribute to the 4-amino-2-methyl-5-(diphosphooxymethyl)pyrimidine site. Mg(2+)-binding residues include aspartate 70 and aspartate 89. Position 108 (serine 108) interacts with 4-amino-2-methyl-5-(diphosphooxymethyl)pyrimidine. 134 to 136 (TGS) provides a ligand contact to 2-[(2R,5Z)-2-carboxy-4-methylthiazol-5(2H)-ylidene]ethyl phosphate. Lysine 137 is a binding site for 4-amino-2-methyl-5-(diphosphooxymethyl)pyrimidine. 2-[(2R,5Z)-2-carboxy-4-methylthiazol-5(2H)-ylidene]ethyl phosphate-binding positions include glycine 165 and 185–186 (IS).

This sequence belongs to the thiamine-phosphate synthase family. Mg(2+) serves as cofactor.

It carries out the reaction 2-[(2R,5Z)-2-carboxy-4-methylthiazol-5(2H)-ylidene]ethyl phosphate + 4-amino-2-methyl-5-(diphosphooxymethyl)pyrimidine + 2 H(+) = thiamine phosphate + CO2 + diphosphate. The catalysed reaction is 2-(2-carboxy-4-methylthiazol-5-yl)ethyl phosphate + 4-amino-2-methyl-5-(diphosphooxymethyl)pyrimidine + 2 H(+) = thiamine phosphate + CO2 + diphosphate. It catalyses the reaction 4-methyl-5-(2-phosphooxyethyl)-thiazole + 4-amino-2-methyl-5-(diphosphooxymethyl)pyrimidine + H(+) = thiamine phosphate + diphosphate. The protein operates within cofactor biosynthesis; thiamine diphosphate biosynthesis; thiamine phosphate from 4-amino-2-methyl-5-diphosphomethylpyrimidine and 4-methyl-5-(2-phosphoethyl)-thiazole: step 1/1. Condenses 4-methyl-5-(beta-hydroxyethyl)thiazole monophosphate (THZ-P) and 2-methyl-4-amino-5-hydroxymethyl pyrimidine pyrophosphate (HMP-PP) to form thiamine monophosphate (TMP). The polypeptide is Thiamine-phosphate synthase (Desulfitobacterium hafniense (strain Y51)).